The primary structure comprises 766 residues: Phospholipid phosphatase-related protein type 4 (766 aa).

Serine 37 carries the phosphoserine modification. The next 3 helical transmembrane spans lie at 68 to 88 (LPCF…SLYF), 120 to 140 (AIPF…TIMV), and 179 to 199 (FVGV…IIQL). Residues asparagine 215 and asparagine 220 are each glycosylated (N-linked (GlcNAc...) asparagine). The helical transmembrane segment at 248 to 268 (SFPSQHATLAAFAAVYVSMYF) threads the bilayer. Asparagine 269 is a glycosylation site (N-linked (GlcNAc...) asparagine). 2 consecutive transmembrane segments (helical) span residues 277–297 (KLLK…CGLT) and 309–329 (VYCG…YAVG). Serine 347 is subject to Phosphoserine. Residue asparagine 363 is glycosylated (N-linked (GlcNAc...) asparagine). Phosphoserine is present on serine 386. A glycan (N-linked (GlcNAc...) asparagine) is linked at asparagine 433. The residue at position 439 (serine 439) is a Phosphoserine. The segment at 454-494 (SKNESRKMSLQVMDTEPEGQSPPRSIEMRSSSEPSRVGVNG) is disordered. Asparagine 456 carries N-linked (GlcNAc...) asparagine glycosylation. Serine 462 and serine 474 each carry phosphoserine. N-linked (GlcNAc...) asparagine glycans are attached at residues asparagine 515, asparagine 545, and asparagine 570. Phosphoserine is present on serine 608. Disordered regions lie at residues 634–654 (PIIQ…KWKA), 672–701 (DSES…HHHH), and 742–766 (ERSN…AYKD). Residues 672 to 697 (DSESCESLKDSFGSGDRKRSNIDSNE) are compositionally biased toward basic and acidic residues. The segment covering 743 to 752 (RSNSPENTRN) has biased composition (polar residues).

Belongs to the PA-phosphatase related phosphoesterase family. Post-translationally, O-glycosylated. Probably at Ser-347. Brain-specific, it is exclusively expressed in neurons (at protein level).

It is found in the postsynaptic density membrane. Functionally, postsynaptic density membrane protein that indirectly regulates glutamatergic synaptic transmission through lysophosphatidic acid (LPA)-mediated signaling pathways. Binds lysophosphatidic acid (LPA) and mediates its internalization into cells. Could act as receptor or a transporter of this lipid at the post-synaptic membrane. Modulates lysophosphatidic acid (LPA) activity in neuron axonal outgrowth during development by attenuating phospholipid-induced axon collapse. The chain is Phospholipid phosphatase-related protein type 4 from Mus musculus (Mouse).